The sequence spans 203 residues: Endo-type membrane-bound lytic murein transglycosylase A (203 aa).

The N-terminal stretch at Met1–Gly15 is a signal peptide. The N-palmitoyl cysteine moiety is linked to residue Cys16. Residue Cys16 is the site of S-diacylglycerol cysteine attachment.

Belongs to the transglycosylase Slt family.

The protein localises to the cell outer membrane. It catalyses the reaction Endolytic cleavage of the (1-&gt;4)-beta-glycosidic linkage between N-acetylmuramic acid (MurNAc) and N-acetylglucosamine (GlcNAc) residues in peptidoglycan with concomitant formation of a 1,6-anhydrobond in the MurNAc residue.. Its function is as follows. Murein-degrading enzyme. May play a role in recycling of muropeptides during cell elongation and/or cell division. Preferentially cleaves at a distance of more than two disaccharide units from the ends of the glycan chain. The protein is Endo-type membrane-bound lytic murein transglycosylase A of Shigella dysenteriae serotype 1 (strain Sd197).